A 311-amino-acid polypeptide reads, in one-letter code: Probable flavin reductase (311 aa).

Residues 38-41 (TANS), 55-61 (CLAKSSR), 88-89 (FA), and R95 contribute to the FMN site.

This sequence belongs to the non-flavoprotein flavin reductase family.

The chain is Probable flavin reductase from Rhizobium meliloti (strain 1021) (Ensifer meliloti).